We begin with the raw amino-acid sequence, 409 residues long: Galactosylgalactosylxylosylprotein 3-beta-glucuronosyltransferase S (409 aa).

Residues 1–45 (MSSARLLESQTSDEDNEDIERRPHQSHSRSCSNNTTPTHPPHPMV) are disordered. Over 1–53 (MSSARLLESQTSDEDNEDIERRPHQSHSRSCSNNTTPTHPPHPMVRKGGVARR) the chain is Cytoplasmic. At Ser9 the chain carries Phosphoserine. Position 11 is a phosphothreonine (Thr11). Phosphoserine is present on residues Ser12 and Ser32. Residues 54 to 73 (ICLIGGALFLLLVALCYLTL) traverse the membrane as a helical; Signal-anchor for type II membrane protein segment. Over 74 to 409 (SGDTRLGGSE…RENPHSKILS (336 aa)) the chain is Lumenal. 2 N-linked (GlcNAc...) asparagine glycosylation sites follow: Asn102 and Asn223. A Mn(2+)-binding site is contributed by Asp235. The Proton acceptor role is filled by Glu318. Asn338 is a glycosylation site (N-linked (GlcNAc...) asparagine). A disordered region spans residues 389–409 (EGRNALISKNGRENPHSKILS). Residues 398–409 (NGRENPHSKILS) are compositionally biased toward basic and acidic residues.

The protein belongs to the glycosyltransferase 43 family. It depends on Mn(2+) as a cofactor.

The protein resides in the golgi apparatus membrane. It carries out the reaction 3-O-(beta-D-galactosyl-(1-&gt;3)-beta-D-galactosyl-(1-&gt;4)-beta-D-xylosyl)-L-seryl-[protein] + UDP-alpha-D-glucuronate = 3-O-(beta-D-GlcA-(1-&gt;3)-beta-D-Gal-(1-&gt;3)-beta-D-Gal-(1-&gt;4)-beta-D-Xyl)-L-seryl-[protein] + UDP + H(+). The protein operates within protein modification; protein glycosylation. Its function is as follows. Involved in the biosynthesis of L2/HNK-1 carbohydrate epitope on both glycolipids and glycoproteins. Enzyme has a broad specificity. The polypeptide is Galactosylgalactosylxylosylprotein 3-beta-glucuronosyltransferase S (GlcAT-S) (Drosophila melanogaster (Fruit fly)).